A 338-amino-acid chain; its full sequence is Aspartate carbamoyltransferase catalytic subunit (338 aa).

The carbamoyl phosphate site is built by arginine 72 and threonine 73. An L-aspartate-binding site is contributed by lysine 100. Carbamoyl phosphate is bound by residues arginine 122, histidine 152, and glutamine 155. L-aspartate contacts are provided by arginine 186 and arginine 243. The carbamoyl phosphate site is built by glycine 284 and proline 285.

It belongs to the aspartate/ornithine carbamoyltransferase superfamily. ATCase family. As to quaternary structure, heterododecamer (2C3:3R2) of six catalytic PyrB chains organized as two trimers (C3), and six regulatory PyrI chains organized as three dimers (R2).

It catalyses the reaction carbamoyl phosphate + L-aspartate = N-carbamoyl-L-aspartate + phosphate + H(+). It participates in pyrimidine metabolism; UMP biosynthesis via de novo pathway; (S)-dihydroorotate from bicarbonate: step 2/3. Its function is as follows. Catalyzes the condensation of carbamoyl phosphate and aspartate to form carbamoyl aspartate and inorganic phosphate, the committed step in the de novo pyrimidine nucleotide biosynthesis pathway. This chain is Aspartate carbamoyltransferase catalytic subunit, found in Acinetobacter baylyi (strain ATCC 33305 / BD413 / ADP1).